Here is a 131-residue protein sequence, read N- to C-terminus: uncharacterized protein (131 aa).

This is an uncharacterized protein from Homo sapiens (Human).